The sequence spans 568 residues: Potassium-transporting ATPase potassium-binding subunit (568 aa).

A run of 10 helical transmembrane segments spans residues 1–21 (MWLTWMEYALVLLLMTALAVP), 60–80 (GLALLLSNGAMLLLGYALLRA), 129–149 (AITFMMFAGAITGVVAAAGFI), 174–194 (VMLPLSFVVALVYVWQGVPQA), 251–271 (IHILGMLLIPSAMTYAFGSML), 278–298 (WVLFGACLVMFVGFLALVFTA), 381–401 (VGLINLLQYAILTVFLAGMMI), 420–440 (VMLAVMAHPISVLGFTALAAV), 488–508 (IGLAMLAGRYLTLLPMLALAG), and 528–548 (PLFMGLLVFVVVVVGGLTFLP).

The protein belongs to the KdpA family. The system is composed of three essential subunits: KdpA, KdpB and KdpC.

The protein resides in the cell inner membrane. In terms of biological role, part of the high-affinity ATP-driven potassium transport (or Kdp) system, which catalyzes the hydrolysis of ATP coupled with the electrogenic transport of potassium into the cytoplasm. This subunit binds the periplasmic potassium ions and delivers the ions to the membrane domain of KdpB through an intramembrane tunnel. This Delftia acidovorans (strain DSM 14801 / SPH-1) protein is Potassium-transporting ATPase potassium-binding subunit.